Reading from the N-terminus, the 271-residue chain is Formamidopyrimidine-DNA glycosylase (271 aa).

The Schiff-base intermediate with DNA role is filled by proline 2. The Proton donor role is filled by glutamate 3. Lysine 57 serves as the catalytic Proton donor; for beta-elimination activity. The DNA site is built by histidine 90, arginine 109, and lysine 151. The segment at 236–270 (HVYGRGSKSCTHCGNLLSEIRLGQRTTVFCGLCQT) adopts an FPG-type zinc-finger fold. The active-site Proton donor; for delta-elimination activity is the arginine 260.

Belongs to the FPG family. In terms of assembly, monomer. Zn(2+) serves as cofactor.

The catalysed reaction is Hydrolysis of DNA containing ring-opened 7-methylguanine residues, releasing 2,6-diamino-4-hydroxy-5-(N-methyl)formamidopyrimidine.. The enzyme catalyses 2'-deoxyribonucleotide-(2'-deoxyribose 5'-phosphate)-2'-deoxyribonucleotide-DNA = a 3'-end 2'-deoxyribonucleotide-(2,3-dehydro-2,3-deoxyribose 5'-phosphate)-DNA + a 5'-end 5'-phospho-2'-deoxyribonucleoside-DNA + H(+). Functionally, involved in base excision repair of DNA damaged by oxidation or by mutagenic agents. Acts as a DNA glycosylase that recognizes and removes damaged bases. Has a preference for oxidized purines, such as 7,8-dihydro-8-oxoguanine (8-oxoG). Has AP (apurinic/apyrimidinic) lyase activity and introduces nicks in the DNA strand. Cleaves the DNA backbone by beta-delta elimination to generate a single-strand break at the site of the removed base with both 3'- and 5'-phosphates. The protein is Formamidopyrimidine-DNA glycosylase of Shewanella denitrificans (strain OS217 / ATCC BAA-1090 / DSM 15013).